The chain runs to 92 residues: MSRSLKKGPFVADHLLKKIEKLNAKGKKVVIKTWSRSSMIVPPMIGHTIGVYNGREHIPVFVSDQMVGHRLGEFSPTRTYRGHAKKDKKAKR.

A disordered region spans residues 73–92 (EFSPTRTYRGHAKKDKKAKR). Residues 80–92 (YRGHAKKDKKAKR) show a composition bias toward basic residues.

It belongs to the universal ribosomal protein uS19 family.

It localises to the plastid. It is found in the chloroplast. In terms of biological role, protein S19 forms a complex with S13 that binds strongly to the 16S ribosomal RNA. The chain is Small ribosomal subunit protein uS19c (rps19) from Chlamydomonas reinhardtii (Chlamydomonas smithii).